The primary structure comprises 123 residues: Succinate dehydrogenase hydrophobic membrane anchor subunit (123 aa).

The Cytoplasmic segment spans residues 1 to 13; sequence MAETEKMKYGSLN. A helical membrane pass occupies residues 14–34; that stretch reads RFAQAVTGLFLLFFLGVHLYV. The Extracellular segment spans residues 35-59; it reads AHIDFGHPVAFFSSVINQLHNPWWL. Residues 60–81 traverse the membrane as a helical segment; the sequence is AFFLIFVYIITYHGINGLNHIV. Histidine 72 provides a ligand contact to heme. Residues 82-91 are Cytoplasmic-facing; the sequence is ADTSISEKAK. A helical transmembrane segment spans residues 92–116; sequence RNIGIALMVIYVITIIYGTILALLV.

In terms of assembly, part of an enzyme complex containing four subunits: a flavoprotein, an iron-sulfur protein, plus two membrane-anchoring proteins, SdhC and SdhD. It depends on heme as a cofactor.

Its subcellular location is the cell membrane. It functions in the pathway carbohydrate metabolism; tricarboxylic acid cycle. Membrane-anchoring subunit of succinate dehydrogenase (SDH). The chain is Succinate dehydrogenase hydrophobic membrane anchor subunit (sdhD) from Thermoplasma acidophilum (strain ATCC 25905 / DSM 1728 / JCM 9062 / NBRC 15155 / AMRC-C165).